The sequence spans 491 residues: Glutamyl-tRNA(Gln) amidotransferase subunit A (491 aa).

Catalysis depends on charge relay system residues Lys-78 and Ser-158. The active-site Acyl-ester intermediate is Ser-182.

Belongs to the amidase family. GatA subfamily. Heterotrimer of A, B and C subunits.

The catalysed reaction is L-glutamyl-tRNA(Gln) + L-glutamine + ATP + H2O = L-glutaminyl-tRNA(Gln) + L-glutamate + ADP + phosphate + H(+). In terms of biological role, allows the formation of correctly charged Gln-tRNA(Gln) through the transamidation of misacylated Glu-tRNA(Gln) in organisms which lack glutaminyl-tRNA synthetase. The reaction takes place in the presence of glutamine and ATP through an activated gamma-phospho-Glu-tRNA(Gln). The protein is Glutamyl-tRNA(Gln) amidotransferase subunit A of Nitrobacter hamburgensis (strain DSM 10229 / NCIMB 13809 / X14).